The sequence spans 705 residues: Gamma-adducin (705 aa).

Positions 1 to 10 (MSSDTSQAVI) are enriched in polar residues. Residues 1 to 22 (MSSDTSQAVITTPPPPSMPHKE) form a disordered region. S2 carries the N-acetylserine modification. Residues S31, S42, S64, S402, S414, S423, S442, and S461 each carry the phosphoserine modification. Disordered regions lie at residues 472-495 (EDPSKVSSGTPIKIEDPNQFVPLN), 535-556 (PSTMRFEDDDQGPPAPPNPFSH), 572-612 (KQQG…EENH), and 658-705 (EITI…KVEA). A Glycyl lysine isopeptide (Lys-Gly) (interchain with G-Cter in SUMO2) cross-link involves residue K484. Residues S583, S585, S590, S672, S676, S678, and S680 each carry the phosphoserine modification. Over residues 590–605 (SVSQIQSQTQSPQSVP) the composition is skewed to low complexity. The segment covering 681 to 705 (PSKKKKKFRTPSFLKKNKKKEKVEA) has biased composition (basic residues). A Phosphoserine; by PKC modification is found at S682. The interval 683 to 700 (KKKKKFRTPSFLKKNKKK) is interaction with calmodulin.

The protein belongs to the aldolase class II family. Adducin subfamily. In terms of assembly, heterodimer of an alpha and a gamma subunit. Sumoylated. Post-translationally, proteolytically cleaved by asparagine endopeptidase (AEP) into 2 fragments. Overexpression of the 1-357 fragment induces neuronal apoptosis, and overexpression of either 1-357 or 358-706 fragment increases the degeneration of dendritic spines. Overexpression of the 1-357 fragment impairs neurite outgrowth by downregulating the expression of Rac2, and induces synaptic dysfunction and cognitive impairments in tau P301S transgenic mice, a mouse model for Alzheimer disease (AD). In terms of tissue distribution, expressed in kidney, brain, spleen, liver and heart. Expressed in renal interlobular arteries, afferent/efferent arterioles, parietal glomerular epithelial cells and microvilli of the luminal surface of the proximal tubule (at protein level). Expressed in podocytes (at protein level) Expressed in renal cortex (at protein level). Expressed in primary vascular smooth muscle cells (VSMCs) of the kidney (at protein level). Expressed in tubular cells and glomeruli (at protein level).

The protein resides in the cytoplasm. It is found in the cytoskeleton. The protein localises to the cell membrane. Its function is as follows. Membrane-cytoskeleton-associated protein that promotes the assembly of the spectrin-actin network. Plays a role in actin filament capping. Binds to calmodulin. Involved in myogenic reactivity of the renal afferent arteriole (Af-art), renal interlobular arteries and middle cerebral artery (MCA) to increased perfusion pressure. Involved in regulation of potassium channels in the vascular smooth muscle cells (VSMCs) of the Af-art and MCA ex vivo. Involved in regulation of glomerular capillary pressure, glomerular filtration rate (GFR) and glomerular nephrin expression in response to hypertension. Involved in renal blood flow (RBF) autoregulation. Plays a role in podocyte structure and function. Regulates globular monomer actin (G-actin) and filamentous polymer actin (F-actin) ratios in the primary podocytes affecting actin cytoskeleton organization. Regulates expression of synaptopodin, RhoA, Rac1 and CDC42 in the renal cortex and the primary podocytes. Regulates expression of nephrin in the glomeruli and in the primary podocytes, expression of nephrin and podocinin in the renal cortex, and expression of focal adhesion proteins integrin alpha-3 and integrin beta-1 in the glomeruli. Involved in cell migration and cell adhesion of podocytes, and in podocyte foot process effacement. Regulates expression of profibrotics markers MMP2, MMP9, TGF beta-1, tubular tight junction protein E-cadherin, and mesenchymal markers vimentin and alpha-SMA. Promotes the growth of neurites. The protein is Gamma-adducin (Add3) of Rattus norvegicus (Rat).